The chain runs to 513 residues: Serine/threonine protein phosphatase 2A 55 kDa regulatory subunit B alpha isoform (513 aa).

At Met1 the chain carries N-acetylmethionine. WD repeat units lie at residues 36-75 (QEVD…NSSG), 112-153 (EIEE…IKKI), 232-270 (AHDY…QSFN), 281-321 (DLSE…LCDS), 340-378 (EIIA…GPVA), and 483-513 (DYTT…MYYA).

It belongs to the phosphatase 2A regulatory subunit B family. PP2A consists of a common heteromeric enzyme, composed of a catalytic subunit (subunits C), a constant regulatory subunit (subunit A), and a variety of regulatory subunits such as subunits B (the R2/B/PR55/B55, R3/B''/PR72/PR130/PR59 and R5/B'/B56 families). Interacts with SIC/RON3. As to expression, expressed ubiquitously.

Functionally, the B regulatory subunit may modulate substrate selectivity and catalytic activity, and may also direct the localization of the catalytic enzyme to a particular subcellular compartment. This chain is Serine/threonine protein phosphatase 2A 55 kDa regulatory subunit B alpha isoform (PP2AB1), found in Arabidopsis thaliana (Mouse-ear cress).